A 952-amino-acid polypeptide reads, in one-letter code: RNA polymerase-associated protein RapA (952 aa).

One can recognise a Helicase ATP-binding domain in the interval 164–334 (EVGRRYAPRV…FARLRLLDPD (171 aa)). 177 to 184 (DEVGLGKT) serves as a coordination point for ATP. Positions 280–283 (DEAH) match the DEAH box motif. A Helicase C-terminal domain is found at 492–668 (RVNWLLELLK…GKSDGLESLI (177 aa)).

This sequence belongs to the SNF2/RAD54 helicase family. RapA subfamily. As to quaternary structure, interacts with the RNAP. Has a higher affinity for the core RNAP than for the holoenzyme. Its ATPase activity is stimulated by binding to RNAP.

Its function is as follows. Transcription regulator that activates transcription by stimulating RNA polymerase (RNAP) recycling in case of stress conditions such as supercoiled DNA or high salt concentrations. Probably acts by releasing the RNAP, when it is trapped or immobilized on tightly supercoiled DNA. Does not activate transcription on linear DNA. Probably not involved in DNA repair. The chain is RNA polymerase-associated protein RapA from Aliivibrio fischeri (strain ATCC 700601 / ES114) (Vibrio fischeri).